Reading from the N-terminus, the 377-residue chain is Nucleosome assembly protein 1;3 (377 aa).

The stretch at 26 to 80 (VNVLKNKLQGLTGKHSNVLENLSPNVRKRVEVLREIQTQHDELEAKFFEERAALE) forms a coiled coil. The Nuclear export signal motif lies at 47-62 (LSPNVRKRVEVLREIQ). The Nuclear localization signal motif lies at 223–228 (KKKPKK). The segment at 298 to 377 (EAAQDEDYID…GERPPECKQQ (80 aa)) is disordered. A compositionally biased stretch (acidic residues) spans 300 to 341 (AQDEDYIDLEDDEDEEDDEDEDEDEEDEEEEDEDEDDDDEDE). Residues 345–357 (KTKKKSSAGRKRS) are compositionally biased toward basic residues. Cys-374 is subject to Cysteine methyl ester. Cys-374 is lipidated: S-farnesyl cysteine. Residues 375 to 377 (KQQ) constitute a propeptide, removed in mature form.

The protein belongs to the nucleosome assembly protein (NAP) family. Can form homomeric and heteromeric protein complexes with NAP1;4. Binds histones H2A and H2B in vivo. Also able to bind histones H1 and H4 in vitro. Interacts with CYCB1;1 and with alpha tubulin.

The protein localises to the nucleus. Its subcellular location is the cytoplasm. Its function is as follows. May modulate chromatin structure by regulation of nucleosome assembly/disassembly. Could function together with B-type cyclins in the regulation of microtubule dynamics. This Nicotiana tabacum (Common tobacco) protein is Nucleosome assembly protein 1;3 (NAP1;3).